The following is a 192-amino-acid chain: Phage-like element PBSX protein XkdU (192 aa).

This sequence to B.subtilis YqcA.

The chain is Phage-like element PBSX protein XkdU (xkdU) from Bacillus subtilis (strain 168).